The sequence spans 670 residues: UvrABC system protein B (670 aa).

The 158-residue stretch at 26–183 (EGLENGLAHQ…RRLSELQYSR (158 aa)) folds into the Helicase ATP-binding domain. 39 to 46 (GVTGSGKT) serves as a coordination point for ATP. The Beta-hairpin signature appears at 92–115 (YYDYYQPEAYVPSSDTFIEKDASV). The region spanning 431–597 (QVDDLLSEIR…GLNKKIGDIL (167 aa)) is the Helicase C-terminal domain. Residues 600–620 (GQPSTRGKGKGRGGKVADTNN) are disordered. In terms of domain architecture, UVR spans 630-665 (DQKIRELEAKMYTHAQNLEFEQAAELRDQVHQLRQQ).

It belongs to the UvrB family. As to quaternary structure, forms a heterotetramer with UvrA during the search for lesions. Interacts with UvrC in an incision complex.

It is found in the cytoplasm. In terms of biological role, the UvrABC repair system catalyzes the recognition and processing of DNA lesions. A damage recognition complex composed of 2 UvrA and 2 UvrB subunits scans DNA for abnormalities. Upon binding of the UvrA(2)B(2) complex to a putative damaged site, the DNA wraps around one UvrB monomer. DNA wrap is dependent on ATP binding by UvrB and probably causes local melting of the DNA helix, facilitating insertion of UvrB beta-hairpin between the DNA strands. Then UvrB probes one DNA strand for the presence of a lesion. If a lesion is found the UvrA subunits dissociate and the UvrB-DNA preincision complex is formed. This complex is subsequently bound by UvrC and the second UvrB is released. If no lesion is found, the DNA wraps around the other UvrB subunit that will check the other stand for damage. The chain is UvrABC system protein B from Yersinia enterocolitica serotype O:8 / biotype 1B (strain NCTC 13174 / 8081).